The primary structure comprises 586 residues: Mitochondrial tRNA methylthiotransferase CDK5RAP1 (586 aa).

A mitochondrion-targeting transit peptide spans 1 to 30 (MHPLQRVFRAQRLSAPLTSMCWVLLRTFRA). A disordered region spans residues 68–90 (ASVPQEKPSSPEVEDPPPYLSGD). One can recognise an MTTase N-terminal domain in the interval 97-217 (RKVYLETYGC…LPRLLAVVES (121 aa)). Residues C106, C142, C180, C255, C259, and C262 each contribute to the [4Fe-4S] cluster site. One can recognise a Radical SAM core domain in the interval 241-495 (SPSATSAFVS…ITVFREEASK (255 aa)). The 76-residue stretch at 498-573 (ATSVGCTQLV…SQTLKGHILC (76 aa)) folds into the TRAM domain.

This sequence belongs to the methylthiotransferase family. MiaB subfamily. Interacts with CDK5R1 (p35 form). CDK5RAP1, CDK5RAP2 and CDK5RAP3 show competitive binding to CDK5R1. Forms a complex with CDK5R1 and CDK5. [4Fe-4S] cluster serves as cofactor. As to expression, expressed in brain.

It is found in the mitochondrion inner membrane. It catalyses the reaction N(6)-dimethylallyladenosine(37) in tRNA + (sulfur carrier)-SH + AH2 + 2 S-adenosyl-L-methionine = 2-methylsulfanyl-N(6)-dimethylallyladenosine(37) in tRNA + (sulfur carrier)-H + 5'-deoxyadenosine + L-methionine + A + S-adenosyl-L-homocysteine + 2 H(+). Its function is as follows. Methylthiotransferase that catalyzes the conversion of N6-(dimethylallyl)adenosine (i(6)A) to 2-methylthio-N6-(dimethylallyl)adenosine (ms(2)i(6)A) at position 37 (adjacent to the 3'-end of the anticodon) of four mitochondrial DNA-encoded tRNAs (Ser(UCN), Phe, Tyr and Trp). Essential for efficient and highly accurate protein translation by the ribosome. Specifically inhibits CDK5 activation by CDK5R1. Essential for efficient mitochondrial protein synthesis and respiratory chain. The chain is Mitochondrial tRNA methylthiotransferase CDK5RAP1 (Cdk5rap1) from Rattus norvegicus (Rat).